The primary structure comprises 376 residues: Actin, cytoplasmic (376 aa).

The protein belongs to the actin family.

It localises to the cytoplasm. The protein localises to the cytoskeleton. The enzyme catalyses ATP + H2O = ADP + phosphate + H(+). In terms of biological role, actins are highly conserved proteins that are involved in various types of cell motility and are ubiquitously expressed in all eukaryotic cells. This chain is Actin, cytoplasmic, found in Tetrahymena pyriformis.